A 579-amino-acid polypeptide reads, in one-letter code: uncharacterized protein (579 aa).

Transmembrane regions (helical) follow at residues 173–193, 196–216, and 218–238; these read IAMG…GGLA, FVAA…MIGA, and YLGT…GFGA.

The protein belongs to the TMCO4 family.

The protein resides in the cytoplasm. It localises to the nucleus membrane. This is an uncharacterized protein from Schizosaccharomyces pombe (strain 972 / ATCC 24843) (Fission yeast).